Consider the following 406-residue polypeptide: Glutamyl-tRNA reductase (406 aa).

Residues 50-53 (TCNR), S107, 112-114 (EPQ), and Q118 contribute to the substrate site. C51 serves as the catalytic Nucleophile. Residue 187–192 (GAGEMG) coordinates NADP(+).

Belongs to the glutamyl-tRNA reductase family. In terms of assembly, homodimer.

The catalysed reaction is (S)-4-amino-5-oxopentanoate + tRNA(Glu) + NADP(+) = L-glutamyl-tRNA(Glu) + NADPH + H(+). The protein operates within porphyrin-containing compound metabolism; protoporphyrin-IX biosynthesis; 5-aminolevulinate from L-glutamyl-tRNA(Glu): step 1/2. In terms of biological role, catalyzes the NADPH-dependent reduction of glutamyl-tRNA(Glu) to glutamate 1-semialdehyde (GSA). The chain is Glutamyl-tRNA reductase from Aquifex aeolicus (strain VF5).